Reading from the N-terminus, the 260-residue chain is UPF0246 protein Veis_4789 (260 aa).

It belongs to the UPF0246 family.

The polypeptide is UPF0246 protein Veis_4789 (Verminephrobacter eiseniae (strain EF01-2)).